Reading from the N-terminus, the 123-residue chain is NADH-quinone oxidoreductase subunit A (123 aa).

A run of 3 helical transmembrane segments spans residues 11 to 31 (YLPI…IMIL), 64 to 84 (ICFY…AFLV), and 93 to 113 (IGKI…IGFI).

Belongs to the complex I subunit 3 family. As to quaternary structure, NDH-1 is composed of 14 different subunits. Subunits NuoA, H, J, K, L, M, N constitute the membrane sector of the complex.

The protein resides in the cell inner membrane. The enzyme catalyses a quinone + NADH + 5 H(+)(in) = a quinol + NAD(+) + 4 H(+)(out). Functionally, NDH-1 shuttles electrons from NADH, via FMN and iron-sulfur (Fe-S) centers, to quinones in the respiratory chain. The immediate electron acceptor for the enzyme in this species is believed to be ubiquinone. Couples the redox reaction to proton translocation (for every two electrons transferred, four hydrogen ions are translocated across the cytoplasmic membrane), and thus conserves the redox energy in a proton gradient. This Rickettsia conorii (strain ATCC VR-613 / Malish 7) protein is NADH-quinone oxidoreductase subunit A.